The following is an 86-amino-acid chain: Putative membrane protein insertion efficiency factor (86 aa).

Residues alanine 66–histidine 86 are disordered.

This sequence belongs to the UPF0161 family.

It is found in the cell inner membrane. In terms of biological role, could be involved in insertion of integral membrane proteins into the membrane. This is Putative membrane protein insertion efficiency factor from Nitratidesulfovibrio vulgaris (strain ATCC 29579 / DSM 644 / CCUG 34227 / NCIMB 8303 / VKM B-1760 / Hildenborough) (Desulfovibrio vulgaris).